Consider the following 546-residue polypeptide: Phosphomethylpyrimidine synthase (546 aa).

Residues 1 to 19 (MSTPSSRSQAPETVTTGPI) are compositionally biased toward polar residues. The segment at 1–20 (MSTPSSRSQAPETVTTGPIQ) is disordered. Substrate is bound by residues asparagine 146, methionine 175, tyrosine 204, histidine 240, 260 to 262 (SRG), 301 to 304 (DGLR), and glutamate 340. Histidine 344 serves as a coordination point for Zn(2+). Position 367 (tyrosine 367) interacts with substrate. Histidine 408 serves as a coordination point for Zn(2+). [4Fe-4S] cluster-binding residues include cysteine 488, cysteine 491, and cysteine 496.

It belongs to the ThiC family. It depends on [4Fe-4S] cluster as a cofactor.

It carries out the reaction 5-amino-1-(5-phospho-beta-D-ribosyl)imidazole + S-adenosyl-L-methionine = 4-amino-2-methyl-5-(phosphooxymethyl)pyrimidine + CO + 5'-deoxyadenosine + formate + L-methionine + 3 H(+). It functions in the pathway cofactor biosynthesis; thiamine diphosphate biosynthesis. Its function is as follows. Catalyzes the synthesis of the hydroxymethylpyrimidine phosphate (HMP-P) moiety of thiamine from aminoimidazole ribotide (AIR) in a radical S-adenosyl-L-methionine (SAM)-dependent reaction. This is Phosphomethylpyrimidine synthase from Mycobacteroides abscessus (strain ATCC 19977 / DSM 44196 / CCUG 20993 / CIP 104536 / JCM 13569 / NCTC 13031 / TMC 1543 / L948) (Mycobacterium abscessus).